A 336-amino-acid polypeptide reads, in one-letter code: Protein REVEILLE 7-like (336 aa).

The region spanning 60-114 (TVTKQREKWSEEEHDRFLEAIKLYGRGWRQIQEHIGTKTAVQIRSHAQKFFSKMA) is the HTH myb-type domain. The segment at residues 87 to 110 (WRQIQEHIGTKTAVQIRSHAQKFF) is a DNA-binding region (H-T-H motif). A disordered region spans residues 114-197 (AQEADSRSEG…KQPFKDDSDI (84 aa)). Residues 134–144 (RPKRKPAHPYP) show a composition bias toward basic residues. Residues 145 to 158 (RKSPVPYTQSPPPN) are compositionally biased toward pro residues. Positions 167 to 189 (KSPTSVLSSFGSEDQNNYTTSKQ) are enriched in polar residues.

It localises to the nucleus. In terms of biological role, probable transcription factor. The protein is Protein REVEILLE 7-like (RVE7L) of Arabidopsis thaliana (Mouse-ear cress).